Reading from the N-terminus, the 359-residue chain is Uracil-DNA glycosylase (359 aa).

Residues 1-21 (MWCMRRLPTNSVMTVARKRKQ) constitute a mitochondrion transit peptide. Catalysis depends on aspartate 162, which acts as the Proton acceptor.

It belongs to the uracil-DNA glycosylase (UDG) superfamily. UNG family.

Its subcellular location is the mitochondrion. It is found in the nucleus. It carries out the reaction Hydrolyzes single-stranded DNA or mismatched double-stranded DNA and polynucleotides, releasing free uracil.. Excises uracil residues from the DNA which can arise as a result of misincorporation of dUMP residues by DNA polymerase or due to deamination of cytosine. Not involved in strand-directed mismatch repair. The chain is Uracil-DNA glycosylase from Saccharomyces cerevisiae (strain ATCC 204508 / S288c) (Baker's yeast).